The sequence spans 131 residues: Small ribosomal subunit protein uS11 (131 aa).

It belongs to the universal ribosomal protein uS11 family. As to quaternary structure, part of the 30S ribosomal subunit.

Its function is as follows. Located on the platform of the 30S subunit. In Methanospirillum hungatei JF-1 (strain ATCC 27890 / DSM 864 / NBRC 100397 / JF-1), this protein is Small ribosomal subunit protein uS11.